The sequence spans 529 residues: Bifunctional purine biosynthesis protein PurH (529 aa).

The MGS-like domain maps to 1 to 148 (MNNARPIRRA…KNHKDTTIIV (148 aa)).

It belongs to the PurH family.

It carries out the reaction (6R)-10-formyltetrahydrofolate + 5-amino-1-(5-phospho-beta-D-ribosyl)imidazole-4-carboxamide = 5-formamido-1-(5-phospho-D-ribosyl)imidazole-4-carboxamide + (6S)-5,6,7,8-tetrahydrofolate. The enzyme catalyses IMP + H2O = 5-formamido-1-(5-phospho-D-ribosyl)imidazole-4-carboxamide. The protein operates within purine metabolism; IMP biosynthesis via de novo pathway; 5-formamido-1-(5-phospho-D-ribosyl)imidazole-4-carboxamide from 5-amino-1-(5-phospho-D-ribosyl)imidazole-4-carboxamide (10-formyl THF route): step 1/1. It functions in the pathway purine metabolism; IMP biosynthesis via de novo pathway; IMP from 5-formamido-1-(5-phospho-D-ribosyl)imidazole-4-carboxamide: step 1/1. The sequence is that of Bifunctional purine biosynthesis protein PurH from Shewanella pealeana (strain ATCC 700345 / ANG-SQ1).